Reading from the N-terminus, the 371-residue chain is tRNA 2-selenouridine synthase (371 aa).

The Rhodanese domain occupies 12 to 135 (FLDDVPMMDM…MRTFLLDTTQ (124 aa)). The active-site S-selanylcysteine intermediate is Cys-95.

The protein belongs to the SelU family. Monomer.

The enzyme catalyses 5-methylaminomethyl-2-thiouridine(34) in tRNA + selenophosphate + (2E)-geranyl diphosphate + H2O + H(+) = 5-methylaminomethyl-2-selenouridine(34) in tRNA + (2E)-thiogeraniol + phosphate + diphosphate. It carries out the reaction 5-methylaminomethyl-2-thiouridine(34) in tRNA + (2E)-geranyl diphosphate = 5-methylaminomethyl-S-(2E)-geranyl-thiouridine(34) in tRNA + diphosphate. The catalysed reaction is 5-methylaminomethyl-S-(2E)-geranyl-thiouridine(34) in tRNA + selenophosphate + H(+) = 5-methylaminomethyl-2-(Se-phospho)selenouridine(34) in tRNA + (2E)-thiogeraniol. It catalyses the reaction 5-methylaminomethyl-2-(Se-phospho)selenouridine(34) in tRNA + H2O = 5-methylaminomethyl-2-selenouridine(34) in tRNA + phosphate. In terms of biological role, involved in the post-transcriptional modification of the uridine at the wobble position (U34) of tRNA(Lys), tRNA(Glu) and tRNA(Gln). Catalyzes the conversion of 2-thiouridine (S2U-RNA) to 2-selenouridine (Se2U-RNA). Acts in a two-step process involving geranylation of 2-thiouridine (S2U) to S-geranyl-2-thiouridine (geS2U) and subsequent selenation of the latter derivative to 2-selenouridine (Se2U) in the tRNA chain. The chain is tRNA 2-selenouridine synthase from Pseudomonas entomophila (strain L48).